We begin with the raw amino-acid sequence, 631 residues long: Origin recognition complex subunit 1 (631 aa).

Low complexity-rich tracts occupy residues Met1–Ile14 and Lys22–His37. The interval Met1–Asn164 is disordered. Positions Asp55 to Asn80 are enriched in basic and acidic residues. The segment covering Glu91–Asp104 has biased composition (acidic residues). The segment covering Glu105–Phe133 has biased composition (basic and acidic residues). Over residues Glu141 to Glu160 the composition is skewed to acidic residues. ATP is bound by residues Val230 and Gly265–Ala273. 2 residues coordinate Mg(2+): Asp361 and Glu362. The ATP site is built by Glu362, Asn395, and Arg460.

The protein belongs to the ORC1 family. As to quaternary structure, ORC is composed of six subunits.

The protein localises to the nucleus. In terms of biological role, component of the origin recognition complex (ORC) that binds origins of replication. DNA-binding is ATP-dependent, however specific DNA sequences that define origins of replication have not been identified so far. ORC is required to assemble the pre-replication complex necessary to initiate DNA replication. This Dictyostelium discoideum (Social amoeba) protein is Origin recognition complex subunit 1 (orcA).